We begin with the raw amino-acid sequence, 249 residues long: Ditrans,polycis-undecaprenyl-diphosphate synthase ((2E,6E)-farnesyl-diphosphate specific) (249 aa).

Residue D18 is part of the active site. D18 provides a ligand contact to Mg(2+). Residues 19-22 (GNNR), F23, K31, H35, and 63-65 (SSE) each bind substrate. N66 (proton acceptor) is an active-site residue. Residues W67, R69, R186, and 192 to 194 (RLS) each bind substrate. A Mg(2+)-binding site is contributed by E205.

This sequence belongs to the UPP synthase family. In terms of assembly, homodimer. The cofactor is Mg(2+).

It carries out the reaction 8 isopentenyl diphosphate + (2E,6E)-farnesyl diphosphate = di-trans,octa-cis-undecaprenyl diphosphate + 8 diphosphate. Catalyzes the sequential condensation of isopentenyl diphosphate (IPP) with (2E,6E)-farnesyl diphosphate (E,E-FPP) to yield (2Z,6Z,10Z,14Z,18Z,22Z,26Z,30Z,34E,38E)-undecaprenyl diphosphate (di-trans,octa-cis-UPP). UPP is the precursor of glycosyl carrier lipid in the biosynthesis of bacterial cell wall polysaccharide components such as peptidoglycan and lipopolysaccharide. This is Ditrans,polycis-undecaprenyl-diphosphate synthase ((2E,6E)-farnesyl-diphosphate specific) from Acinetobacter baylyi (strain ATCC 33305 / BD413 / ADP1).